Reading from the N-terminus, the 395-residue chain is Putative 8-amino-7-oxononanoate synthase (395 aa).

Position 23 (Arg23) interacts with substrate. Position 110-111 (110-111) interacts with pyridoxal 5'-phosphate; the sequence is GY. Position 135 (His135) interacts with substrate. Pyridoxal 5'-phosphate-binding positions include Ser181, 206–209, and 237–240; these read DEAH and TFSK. Lys240 is subject to N6-(pyridoxal phosphate)lysine. Thr354 lines the substrate pocket.

It belongs to the class-II pyridoxal-phosphate-dependent aminotransferase family. BioF subfamily. In terms of assembly, homodimer. The cofactor is pyridoxal 5'-phosphate.

The catalysed reaction is 6-carboxyhexanoyl-[ACP] + L-alanine + H(+) = (8S)-8-amino-7-oxononanoate + holo-[ACP] + CO2. The protein operates within cofactor biosynthesis; biotin biosynthesis. Catalyzes the decarboxylative condensation of pimeloyl-[acyl-carrier protein] and L-alanine to produce 8-amino-7-oxononanoate (AON), [acyl-carrier protein], and carbon dioxide. This Halalkalibacterium halodurans (strain ATCC BAA-125 / DSM 18197 / FERM 7344 / JCM 9153 / C-125) (Bacillus halodurans) protein is Putative 8-amino-7-oxononanoate synthase (bioF).